A 99-amino-acid polypeptide reads, in one-letter code: Acylphosphatase (99 aa).

In terms of domain architecture, Acylphosphatase-like spans Ile5–Pro97. Active-site residues include Arg20 and Asn38.

Belongs to the acylphosphatase family.

The catalysed reaction is an acyl phosphate + H2O = a carboxylate + phosphate + H(+). This Bradyrhizobium diazoefficiens (strain JCM 10833 / BCRC 13528 / IAM 13628 / NBRC 14792 / USDA 110) protein is Acylphosphatase (acyP).